Reading from the N-terminus, the 277-residue chain is tRNA U34 carboxymethyltransferase (277 aa).

Residues K46, W60, K65, G84, 106–108, 133–134, Y153, and R268 each bind carboxy-S-adenosyl-L-methionine; these read DPS and VE.

The protein belongs to the class I-like SAM-binding methyltransferase superfamily. CmoB family. In terms of assembly, homotetramer.

The enzyme catalyses carboxy-S-adenosyl-L-methionine + 5-hydroxyuridine(34) in tRNA = 5-carboxymethoxyuridine(34) in tRNA + S-adenosyl-L-homocysteine + H(+). Functionally, catalyzes carboxymethyl transfer from carboxy-S-adenosyl-L-methionine (Cx-SAM) to 5-hydroxyuridine (ho5U) to form 5-carboxymethoxyuridine (cmo5U) at position 34 in tRNAs. The protein is tRNA U34 carboxymethyltransferase of Wolinella succinogenes (strain ATCC 29543 / DSM 1740 / CCUG 13145 / JCM 31913 / LMG 7466 / NCTC 11488 / FDC 602W) (Vibrio succinogenes).